The primary structure comprises 282 residues: Elongation factor Ts (282 aa).

The tract at residues 80–83 (TDFV) is involved in Mg(2+) ion dislocation from EF-Tu.

It belongs to the EF-Ts family.

The protein localises to the cytoplasm. Functionally, associates with the EF-Tu.GDP complex and induces the exchange of GDP to GTP. It remains bound to the aminoacyl-tRNA.EF-Tu.GTP complex up to the GTP hydrolysis stage on the ribosome. This is Elongation factor Ts (tsf) from Pasteurella multocida (strain Pm70).